Here is a 601-residue protein sequence, read N- to C-terminus: Elongation factor 4 (601 aa).

One can recognise a tr-type G domain in the interval 5 to 187; that stretch reads EHIRNFSIIA…AIVERLPAPE (183 aa). GTP-binding positions include 17 to 22 and 134 to 137; these read DHGKST and NKID.

This sequence belongs to the TRAFAC class translation factor GTPase superfamily. Classic translation factor GTPase family. LepA subfamily.

The protein localises to the cell inner membrane. The catalysed reaction is GTP + H2O = GDP + phosphate + H(+). Functionally, required for accurate and efficient protein synthesis under certain stress conditions. May act as a fidelity factor of the translation reaction, by catalyzing a one-codon backward translocation of tRNAs on improperly translocated ribosomes. Back-translocation proceeds from a post-translocation (POST) complex to a pre-translocation (PRE) complex, thus giving elongation factor G a second chance to translocate the tRNAs correctly. Binds to ribosomes in a GTP-dependent manner. The protein is Elongation factor 4 of Nitratidesulfovibrio vulgaris (strain ATCC 29579 / DSM 644 / CCUG 34227 / NCIMB 8303 / VKM B-1760 / Hildenborough) (Desulfovibrio vulgaris).